The following is a 194-amino-acid chain: Peptidyl-tRNA hydrolase (194 aa).

Tyr-17 provides a ligand contact to tRNA. The active-site Proton acceptor is the His-22. The tRNA site is built by Phe-68, Asn-70, and Asn-116.

The protein belongs to the PTH family. In terms of assembly, monomer.

Its subcellular location is the cytoplasm. The enzyme catalyses an N-acyl-L-alpha-aminoacyl-tRNA + H2O = an N-acyl-L-amino acid + a tRNA + H(+). In terms of biological role, hydrolyzes ribosome-free peptidyl-tRNAs (with 1 or more amino acids incorporated), which drop off the ribosome during protein synthesis, or as a result of ribosome stalling. Catalyzes the release of premature peptidyl moieties from peptidyl-tRNA molecules trapped in stalled 50S ribosomal subunits, and thus maintains levels of free tRNAs and 50S ribosomes. The chain is Peptidyl-tRNA hydrolase from Histophilus somni (strain 2336) (Haemophilus somnus).